Here is a 2266-residue protein sequence, read N- to C-terminus: Protein ELYS (2266 aa).

The tract at residues methionine 1 to glycine 494 is seven-bladed beta propeller repeats. Residues methionine 1 to aspartate 981 form a necessary for cytoplasmic localization region. Phosphoserine occurs at positions 509, 528, 1080, 1138, 1142, 1150, 1153, 1155, and 1160. The segment at valine 591–serine 1092 is important for nuclear localization. The tract at residues tyrosine 1019–leucine 2266 is disordered. The necessary for nuclear localization stretch occupies residues arginine 1149–leucine 2266. Threonine 1175 bears the Phosphothreonine mark. Residues serine 1214, serine 1218, serine 1222, serine 1232, and serine 1250 each carry the phosphoserine modification. Threonine 1257 carries the post-translational modification Phosphothreonine. 2 positions are modified to phosphoserine: serine 1283 and serine 1297. Polar residues-rich tracts occupy residues lysine 1305 to glutamate 1320 and phenylalanine 1335 to glutamate 1353. Residue threonine 1369 is modified to Phosphothreonine. Serine 1371 and serine 1513 each carry phosphoserine. Residues arginine 1446–proline 1698 are mediates transcriptional activity. A Phosphothreonine modification is found at threonine 1517. 4 positions are modified to phosphoserine: serine 1533, serine 1541, serine 1729, and serine 1806. Composition is skewed to polar residues over residues leucine 1796–threonine 1808 and isoleucine 1822–glycine 1838. Phosphothreonine is present on threonine 1808. Residues lysine 1842–leucine 2266 are important for nuclear localization and chromatin binding. Phosphoserine is present on residues serine 1878, serine 1884, and serine 1898. A compositionally biased stretch (polar residues) spans serine 1908–asparagine 1919. 2 stretches are compositionally biased toward basic and acidic residues: residues lysine 1920–leucine 1930 and glycine 1940–serine 1952. Residues serine 1944 and serine 1946 each carry the phosphoserine modification. Residues proline 1971–serine 1983 constitute a DNA-binding region (a.T hook). The segment covering valine 1986–serine 2004 has biased composition (basic and acidic residues). A phosphoserine mark is found at serine 1996, serine 2043, serine 2044, and serine 2060. Basic and acidic residues predominate over residues valine 2064–leucine 2084. Phosphoserine is present on residues serine 2089, serine 2120, serine 2123, and serine 2154. The segment covering asparagine 2169–alanine 2179 has biased composition (basic and acidic residues). Over residues proline 2188–lysine 2197 the composition is skewed to basic residues. Phosphoserine occurs at positions 2212, 2222, and 2226.

Belongs to the ELYS family. In terms of assembly, associates with the Nup107-160 subcomplex of the NPC.

The protein resides in the cytoplasm. It is found in the nucleus. The protein localises to the nucleus envelope. It localises to the nucleus matrix. Its subcellular location is the chromosome. The protein resides in the centromere. It is found in the kinetochore. The protein localises to the nucleoplasm. It localises to the nuclear pore complex. Its function is as follows. Required for the assembly of a functional nuclear pore complex (NPC) on the surface of chromosomes as nuclei form at the end of mitosis. May initiate NPC assembly by binding to chromatin and recruiting the Nup107-160 subcomplex of the NPC. Also required for the localization of the Nup107-160 subcomplex of the NPC to the kinetochore during mitosis and for the completion of cytokinesis. The protein is Protein ELYS (AHCTF1) of Homo sapiens (Human).